Consider the following 241-residue polypeptide: Biosynthetic peptidoglycan transglycosylase (241 aa).

A helical membrane pass occupies residues 18–38 (GVIGIIALWMAGILIFAFLPV).

Belongs to the glycosyltransferase 51 family.

The protein resides in the cell inner membrane. It catalyses the reaction [GlcNAc-(1-&gt;4)-Mur2Ac(oyl-L-Ala-gamma-D-Glu-L-Lys-D-Ala-D-Ala)](n)-di-trans,octa-cis-undecaprenyl diphosphate + beta-D-GlcNAc-(1-&gt;4)-Mur2Ac(oyl-L-Ala-gamma-D-Glu-L-Lys-D-Ala-D-Ala)-di-trans,octa-cis-undecaprenyl diphosphate = [GlcNAc-(1-&gt;4)-Mur2Ac(oyl-L-Ala-gamma-D-Glu-L-Lys-D-Ala-D-Ala)](n+1)-di-trans,octa-cis-undecaprenyl diphosphate + di-trans,octa-cis-undecaprenyl diphosphate + H(+). It participates in cell wall biogenesis; peptidoglycan biosynthesis. In terms of biological role, peptidoglycan polymerase that catalyzes glycan chain elongation from lipid-linked precursors. This chain is Biosynthetic peptidoglycan transglycosylase, found in Yersinia pseudotuberculosis serotype IB (strain PB1/+).